Reading from the N-terminus, the 313-residue chain is Methionyl-tRNA formyltransferase (313 aa).

112–115 contacts (6S)-5,6,7,8-tetrahydrofolate; it reads SLLP.

The protein belongs to the Fmt family.

It catalyses the reaction L-methionyl-tRNA(fMet) + (6R)-10-formyltetrahydrofolate = N-formyl-L-methionyl-tRNA(fMet) + (6S)-5,6,7,8-tetrahydrofolate + H(+). Attaches a formyl group to the free amino group of methionyl-tRNA(fMet). The formyl group appears to play a dual role in the initiator identity of N-formylmethionyl-tRNA by promoting its recognition by IF2 and preventing the misappropriation of this tRNA by the elongation apparatus. The polypeptide is Methionyl-tRNA formyltransferase (Roseiflexus castenholzii (strain DSM 13941 / HLO8)).